A 494-amino-acid polypeptide reads, in one-letter code: 5'-3' exonuclease PLD3 (494 aa).

Over 1-37 the chain is Cytoplasmic; the sequence is MNPKVEYKQIQSHDEAENQVLQHECHQAKARKYYRCA. A helical; Signal-anchor for type II membrane protein membrane pass occupies residues 38 to 58; the sequence is VVIAIIITLLFCVLASQLLLF. Residues 59-494 are Lumenal-facing; the sequence is PLFSITSQTT…LSSWKEKCIF (436 aa). N-linked (GlcNAc...) asparagine glycosylation is present at N100. The region spanning 198 to 225 is the PLD phosphodiesterase 1 domain; it reads TDGVLHTKFWVVDSEHFYIGSANMDWRS. Catalysis depends on residues H203, K205, and D210. Residues N238, N260, N270, N286, and N389 are each glycosylated (N-linked (GlcNAc...) asparagine). In terms of domain architecture, PLD phosphodiesterase 2 spans 413–439; that stretch reads YARVNHNKYMVTDRVAYIGTSNWSGDY. Residues H418, K420, and D425 contribute to the active site. 3 N-linked (GlcNAc...) asparagine glycosylation sites follow: N434, N451, and N477.

The protein belongs to the phospholipase D family. Post-translationally, N-glycosylated. In terms of processing, proteolytically processed to a soluble form that is stable within endosomes and lysosomes. During transport through the secretory pathway becomes proteolysed by cysteine proteases, thereby releasing a stable soluble lysosomal lumenal polypeptide, whereas the transmembrane-bound fragment is rapidly degraded. Its transport route to lysosomes involves ubiquitination and the ESCRT complex. Ubiquitinated. Ubiquitination mediates sorting into lysosomes.

The protein resides in the endoplasmic reticulum membrane. It is found in the lysosome lumen. Its subcellular location is the early endosome membrane. It localises to the late endosome membrane. The protein localises to the golgi apparatus membrane. The protein resides in the endosome membrane. It catalyses the reaction Exonucleolytic cleavage in the 5'- to 3'-direction to yield nucleoside 3'-phosphates.. 5'-&gt;3' DNA exonuclease which digests single-stranded DNA (ssDNA). Regulates inflammatory cytokine responses via the degradation of nucleic acids, by reducing the concentration of ssDNA able to stimulate TLR9, a nucleotide-sensing receptor in collaboration with PLD4. May be important in myotube formation. Plays a role in lysosomal homeostasis. Involved in the regulation of endosomal protein sorting. The sequence is that of 5'-3' exonuclease PLD3 (pld3) from Xenopus tropicalis (Western clawed frog).